The primary structure comprises 204 residues: Pyrrolidone-carboxylate peptidase (204 aa).

Catalysis depends on residues Glu-78, Cys-141, and His-165.

It belongs to the peptidase C15 family. Homotetramer.

It localises to the cytoplasm. The catalysed reaction is Release of an N-terminal pyroglutamyl group from a polypeptide, the second amino acid generally not being Pro.. Removes 5-oxoproline from various penultimate amino acid residues except L-proline. This is Pyrrolidone-carboxylate peptidase from Levilactobacillus brevis (strain ATCC 367 / BCRC 12310 / CIP 105137 / JCM 1170 / LMG 11437 / NCIMB 947 / NCTC 947) (Lactobacillus brevis).